The sequence spans 127 residues: Large ribosomal subunit protein bL17 (127 aa).

The protein belongs to the bacterial ribosomal protein bL17 family. Part of the 50S ribosomal subunit. Contacts protein L32.

The polypeptide is Large ribosomal subunit protein bL17 (Xanthomonas campestris pv. campestris (strain 8004)).